The following is a 503-amino-acid chain: Splicing factor 3A subunit 3 (503 aa).

2 disordered regions span residues 296 to 317 (PALM…EHER) and 341 to 384 (ATKE…NPKN). Residues 358-377 (DDSDVEASESDNEDDPDADD) are compositionally biased toward acidic residues. Phosphoserine occurs at positions 360, 365, and 367. The Matrin-type zinc finger occupies 408-439 (YNCEICGNFTYKGPKAFQRHFAEWRHAHGMRC).

Belongs to the SF3A3 family. In terms of assembly, probable component of a the U2 small nuclear ribonucleoproteins complex (U2 snRNP). As to expression, ubiquitous. In ovaries and testes, it is expressed in all germ and somatic cells. Highly expressed in spermatogonias and spermatocytes. Highly expressed in the germ cells of larval testes, while it is weakly expressed in fat body cells, in polyploid nuclei of salivary glands, and in larval brain.

The protein resides in the nucleus. Probable subunit of a splicing factor complex required for 'A' complex assembly formed by the stable binding of U2 snRNP to the branchpoint sequence (BPS) in pre-mRNA. Involved in male fertility. The polypeptide is Splicing factor 3A subunit 3 (noi) (Drosophila melanogaster (Fruit fly)).